The sequence spans 355 residues: Peptide chain release factor 1 (355 aa).

Q233 carries the post-translational modification N5-methylglutamine. Positions 280–293 are enriched in basic and acidic residues; it reads ERRKKEQERADSRR. The disordered stretch occupies residues 280–308; it reads ERRKKEQERADSRRGQVGSGDRSERIRTY.

It belongs to the prokaryotic/mitochondrial release factor family. In terms of processing, methylated by PrmC. Methylation increases the termination efficiency of RF1.

The protein resides in the cytoplasm. Peptide chain release factor 1 directs the termination of translation in response to the peptide chain termination codons UAG and UAA. The sequence is that of Peptide chain release factor 1 from Rickettsia felis (strain ATCC VR-1525 / URRWXCal2) (Rickettsia azadi).